The chain runs to 183 residues: Intermembrane phospholipid transport system binding protein MlaD (183 aa).

Topologically, residues M1–E7 are cytoplasmic. A helical; Signal-anchor for type II membrane protein membrane pass occupies residues I8–A28. Over A29–K183 the chain is Periplasmic. The MCE/MlaD stretch occupies residues T39–V116. A disordered region spans residues K155–K183. A compositionally biased stretch (polar residues) spans N172–K183.

The protein belongs to the MlaD family. As to quaternary structure, the complex is composed of two ATP-binding proteins (MlaF), two transmembrane proteins (MlaE), two cytoplasmic solute-binding proteins (MlaB) and six periplasmic solute-binding proteins (MlaD).

It localises to the cell inner membrane. Its function is as follows. Part of the ABC transporter complex MlaFEDB, which is involved in a phospholipid transport pathway that maintains lipid asymmetry in the outer membrane by retrograde trafficking of phospholipids from the outer membrane to the inner membrane. MlaD functions in substrate binding with strong affinity for phospholipids and modulates ATP hydrolytic activity of the complex. This chain is Intermembrane phospholipid transport system binding protein MlaD, found in Escherichia coli O157:H7.